We begin with the raw amino-acid sequence, 238 residues long: Small ribosomal subunit protein uS2 (238 aa).

This sequence belongs to the universal ribosomal protein uS2 family.

The sequence is that of Small ribosomal subunit protein uS2 from Actinobacillus pleuropneumoniae serotype 7 (strain AP76).